A 238-amino-acid chain; its full sequence is Zinc-finger homeodomain protein 11 (238 aa).

The ZF-HD dimerization-type; degenerate zinc finger occupies 12 to 59 (YRECMRNHAAKLGTYANDGCCEYTPDDGHPAGLLCAACGCHRNFHRKD). Residues 119 to 188 (RRRTRTKFTE…NHKAGGGGGG (70 aa)) constitute a DNA-binding region (homeobox). Gly residues predominate over residues 183–200 (GGGGGGGGSGGPGAGGGA). The disordered stretch occupies residues 183–238 (GGGGGGGGSGGPGAGGGAQTSSSTTRGGGDVGVGLSPAMGGDGEDDEEVRGSEMCM).

As to quaternary structure, homo- and heterodimer with other ZFHD proteins.

It is found in the nucleus. In terms of biological role, putative transcription factor. This is Zinc-finger homeodomain protein 11 (ZHD11) from Oryza sativa subsp. indica (Rice).